Reading from the N-terminus, the 610-residue chain is E-selectin (610 aa).

Residues 1–21 form the signal peptide; the sequence is MIASQFLSALTLVLLIKESGA. Residues 22–138 form the C-type lectin domain; the sequence is WSYSASTTNM…CNKKKLALCY (117 aa). Residues 22-555 are Extracellular-facing; the sequence is WSYSASTTNM…CEATAKSNIP (534 aa). A glycan (N-linked (GlcNAc...) asparagine) is linked at N30. 19 disulfides stabilise this stretch: C40-C137, C110-C129, C142-C153, C147-C162, C164-C173, C179-C223, C192-C205, C209-C236, C241-C285, C254-C267, C271-C298, C303-C348, C334-C361, C366-C411, C397-C424, C429-C474, C460-C487, C492-C533, and C519-C546. E101, N103, and E108 together coordinate Ca(2+). Residues 101-108, 112-117, and 125-127 each bind a carbohydrate; these read EPNNKQNE, EIYIKR, and NDE. Residues N125 and D126 each contribute to the Ca(2+) site. In terms of domain architecture, EGF-like spans 139–174; the sequence is TAACTHTSCSGHGECVETINNYTCQCHPGFTGLRCE. Residue N159 is glycosylated (N-linked (GlcNAc...) asparagine). 6 consecutive Sushi domains span residues 177 to 238, 239 to 300, 314 to 363, 365 to 426, 428 to 489, and 490 to 548; these read VTCQ…ACHV, VECD…TCKA, VNCS…VCKA, QCKA…TCEA, RCDA…SCQV, and VQCA…TCEA. N-linked (GlcNAc...) asparagine glycans are attached at residues N198 and N202. N264 carries N-linked (GlcNAc...) asparagine glycosylation. 3 N-linked (GlcNAc...) asparagine glycosylation sites follow: N315, N327, and N331. N-linked (GlcNAc...) asparagine glycosylation is present at N526. A helical membrane pass occupies residues 556 to 577; that stretch reads LTVGLSAAGTSLLTLASFLFWL. Residues 578–610 are Cytoplasmic-facing; that stretch reads LKRLRRKAKKFVPASSYQSLQSDGSYQMPSESA.

This sequence belongs to the selectin/LECAM family. As to quaternary structure, interacts with SELPLG/PSGL1 and PODXL2 through the sialyl Lewis X epitope. SELPLG sulfation appears not to be required for this interaction.

It localises to the cell membrane. In terms of biological role, cell-surface glycoprotein having a role in immunoadhesion. Mediates in the adhesion of blood neutrophils in cytokine-activated endothelium through interaction with SELPLG/PSGL1. May have a role in capillary morphogenesis. This Equus caballus (Horse) protein is E-selectin (SELE).